A 109-amino-acid chain; its full sequence is Cell division protein ZapA (109 aa).

Residues 22–99 (EQQDALNLAA…IEQALLEQGR (78 aa)) adopt a coiled-coil conformation.

This sequence belongs to the ZapA family. Type 1 subfamily. In terms of assembly, homodimer. Interacts with FtsZ.

The protein resides in the cytoplasm. Functionally, activator of cell division through the inhibition of FtsZ GTPase activity, therefore promoting FtsZ assembly into bundles of protofilaments necessary for the formation of the division Z ring. It is recruited early at mid-cell but it is not essential for cell division. In Erwinia tasmaniensis (strain DSM 17950 / CFBP 7177 / CIP 109463 / NCPPB 4357 / Et1/99), this protein is Cell division protein ZapA.